The following is a 245-amino-acid chain: Ribosomal RNA small subunit methyltransferase J (245 aa).

S-adenosyl-L-methionine-binding positions include 94–95 (RD), 110–111 (ER), and D164.

The protein belongs to the methyltransferase superfamily. RsmJ family.

The protein resides in the cytoplasm. It catalyses the reaction guanosine(1516) in 16S rRNA + S-adenosyl-L-methionine = N(2)-methylguanosine(1516) in 16S rRNA + S-adenosyl-L-homocysteine + H(+). Specifically methylates the guanosine in position 1516 of 16S rRNA. This Dechloromonas aromatica (strain RCB) protein is Ribosomal RNA small subunit methyltransferase J.